Consider the following 296-residue polypeptide: Ceramide synthase LOH2 (296 aa).

A run of 6 helical transmembrane segments spans residues 19-39 (VWHFQIAVYFAFGFFFLRLVL), 80-100 (LLYYAACDFFVLQVIYHEPWA), 121-141 (LYYMCQCGFYVYGVAALLAWE), 158-178 (IILLSYSYLTSFFRIGAIILA), 206-226 (FALFAVSWLLLRLIYFPFWII), and 254-274 (MLLMLLVFHIYWWYLICAMIV). The 208-residue stretch at 71 to 278 (VKCKESLWKL…ICAMIVRLLK (208 aa)) folds into the TLC domain. A phosphoserine mark is found at Ser289 and Ser291.

Expressed ubiquitously with highest levels in pollen.

It is found in the endoplasmic reticulum membrane. It carries out the reaction a sphingoid base + hexadecanoyl-CoA = an N-hexadecanoyl-sphingoid base + CoA + H(+). The catalysed reaction is sphinganine + hexadecanoyl-CoA = N-hexadecanoylsphinganine + CoA + H(+). It catalyses the reaction sphing-4-enine + hexadecanoyl-CoA = N-hexadecanoylsphing-4-enine + CoA + H(+). The enzyme catalyses sphinga-(4E,8E)-dienine + hexadecanoyl-CoA = N-hexadecanoylsphinga-(4E,8E)-dienine + CoA + H(+). It carries out the reaction sphinga-(4E,8Z)-dienine + hexadecanoyl-CoA = N-hexadecanoylsphinga-(4E,8Z)-dienine + CoA + H(+). Its pathway is sphingolipid metabolism. With respect to regulation, inhibited by the mycotoxin fumonisin B(1), a sphingosine analog mycotoxins produced by pathogenic fungi. Activated by divalent cation such as magnesium Mg(2+), zinc Zn(2+), manganese Mn(2+) and calcium Ca(2+). Its function is as follows. Prevents cell division in root meristems and promotes salicylic acid (SA) production and hypersensitive response (HR). Catalyzes the biosynthesis of ceramide sphingolipids with C(16) fatty acids, structural membrane lipids involved in membrane trafficking (e.g. early endosomes) and cell polarity (e.g. polar auxin transport related proteins); accepts only C16:0 fatty acids, but with a wide range of d18 sphingoid bases, such as sphinganine (d18:0) and palmitoyl-CoA. Mediates resistance to sphinganine-analog mycotoxins (SAMs, e.g. fumonisin B(1)) by restoring the sphingolipid biosynthesis. Could salvage the transport of GPI-anchored proteins from the endoplasmic reticulum to the Golgi apparatus in ceramides-depleted cells after SAM exposure. Contributes to hypoxic conditions tolerance (e.g. submergences), especially in the dark, by promoting the formation of very-long-chain (VLC) ceramide species (22:1, 24:1 and 26:1) and of VLC unsaturated ceramides, which are modulating CTR1-mediated ethylene signaling leading to endoplasmic reticulum (ER)-to-nucleus translocation of EIN2 and EIN3. This is Ceramide synthase LOH2 from Arabidopsis thaliana (Mouse-ear cress).